The primary structure comprises 63 residues: Small integral membrane protein 43 (63 aa).

2 important for interaction with SLC2A1 and SLC2A3 regions span residues leucine 7–isoleucine 29 and histidine 51–phenylalanine 57. Residues leucine 9–isoleucine 29 traverse the membrane as a helical segment.

In terms of assembly, interacts with glucose transporters SLC2A1/GLUT1 and SLC2A3/GLUT3; the interactions may promote SLC2A1- and SLC2A3-mediated glucose transport to meet the energy needs of mesendoderm differentiation.

It localises to the cell membrane. Functionally, required for mesendoderm differentiation. Interacts with glucose transporters and promotes glucose uptake. Probably augments the glucose uptake capacity of glucose transporter proteins to meet the energy needs of mesendoderm differentiation. The chain is Small integral membrane protein 43 from Homo sapiens (Human).